A 30-amino-acid polypeptide reads, in one-letter code: Kappa-sparatoxin-Hv1b (30 aa).

Disulfide bonds link Cys-3-Cys-17, Cys-10-Cys-22, and Cys-16-Cys-26. At Trp-30 the chain carries Tryptophan amide.

This sequence belongs to the neurotoxin 10 (Hwtx-1) family. 19 (HpTX2) subfamily. As to expression, expressed by the venom gland.

It is found in the secreted. Its function is as follows. Inhibitor of voltage-gated potassium channels of the Kv4/KCND family. Inhibition of Kv4.3/KCND3 and Kv4.2/KCND2 is strongly voltage-dependent, while inhibition of Kv4.1/KCND1 shows less voltage-dependence. Its binding site may be near the potassium channel voltage sensor. Also blocks calcium channels. This chain is Kappa-sparatoxin-Hv1b, found in Heteropoda venatoria (Brown huntsman spider).